A 765-amino-acid polypeptide reads, in one-letter code: Probable dipeptidyl peptidase 4 (765 aa).

An N-terminal signal peptide occupies residues 1–14 (MKWSILLLVGCAAA). N-linked (GlcNAc...) asparagine glycans are attached at residues asparagine 35, asparagine 78, asparagine 101, asparagine 110, asparagine 169, asparagine 218, asparagine 465, and asparagine 490. Serine 613 functions as the Charge relay system in the catalytic mechanism. N-linked (GlcNAc...) asparagine glycosylation is present at asparagine 665. Catalysis depends on charge relay system residues aspartate 690 and histidine 725.

It belongs to the peptidase S9B family.

It is found in the secreted. It carries out the reaction Release of an N-terminal dipeptide, Xaa-Yaa-|-Zaa-, from a polypeptide, preferentially when Yaa is Pro, provided Zaa is neither Pro nor hydroxyproline.. Functionally, extracellular dipeptidyl-peptidase which removes N-terminal dipeptides sequentially from polypeptides having unsubstituted N-termini provided that the penultimate residue is proline. This is Probable dipeptidyl peptidase 4 (dpp4) from Neosartorya fischeri (strain ATCC 1020 / DSM 3700 / CBS 544.65 / FGSC A1164 / JCM 1740 / NRRL 181 / WB 181) (Aspergillus fischerianus).